The primary structure comprises 355 residues: Protein RecA (355 aa).

An ATP-binding site is contributed by 74-81; sequence GPESSGKT.

Belongs to the RecA family.

It localises to the cytoplasm. Its function is as follows. Can catalyze the hydrolysis of ATP in the presence of single-stranded DNA, the ATP-dependent uptake of single-stranded DNA by duplex DNA, and the ATP-dependent hybridization of homologous single-stranded DNAs. It interacts with LexA causing its activation and leading to its autocatalytic cleavage. The protein is Protein RecA of Cytophaga hutchinsonii (strain ATCC 33406 / DSM 1761 / CIP 103989 / NBRC 15051 / NCIMB 9469 / D465).